Consider the following 345-residue polypeptide: Ferrochelatase (345 aa).

The Fe cation site is built by H215 and E296.

The protein belongs to the ferrochelatase family.

The protein resides in the cytoplasm. The catalysed reaction is heme b + 2 H(+) = protoporphyrin IX + Fe(2+). It functions in the pathway porphyrin-containing compound metabolism; protoheme biosynthesis; protoheme from protoporphyrin-IX: step 1/1. Functionally, catalyzes the ferrous insertion into protoporphyrin IX. The polypeptide is Ferrochelatase (Rhodopseudomonas palustris (strain TIE-1)).